We begin with the raw amino-acid sequence, 417 residues long: Probable serine incorporator (417 aa).

10 helical membrane passes run 25-45 (VYVVFFLLVSIVAYILSYWTF), 69-89 (VVYRLTFGLALYHILLGLVMI), 104-124 (GYWPLKILLLGVLIFVSFFIP), 131-151 (YTWISIFSAAIFIFIQLVLLI), 180-200 (CVLSFGSIALAVAGTVLMLVF), 208-228 (INQFYIVFNLGICLIVGVLSI), 239-259 (SGLFQSGVVMLYCTYLIYSAI), 276-296 (KESTIIIGAVFTIISVCYSAF), 339-359 (FFHFTFACGAMYLSALLTNWA), and 391-411 (VVSSWVVVLLYLWTLIGPILL).

Belongs to the TDE1 family.

It localises to the endoplasmic reticulum membrane. Enhances the incorporation of serine into phosphatidylserine and sphingolipids. This Dictyostelium discoideum (Social amoeba) protein is Probable serine incorporator (serinc).